The following is a 511-amino-acid chain: Maturase K (511 aa).

This sequence belongs to the intron maturase 2 family. MatK subfamily.

It is found in the plastid. It localises to the chloroplast. In terms of biological role, usually encoded in the trnK tRNA gene intron. Probably assists in splicing its own and other chloroplast group II introns. The polypeptide is Maturase K (Melica altissima (Siberian melic grass)).